The chain runs to 322 residues: Phosphatidylglycerol--prolipoprotein diacylglyceryl transferase (322 aa).

The next 4 membrane-spanning stretches (helical) occupy residues 21 to 41 (PLPI…AIWL), 50 to 70 (GGNP…GIIG), 98 to 118 (NGGL…WAYF), and 123 to 143 (IPLA…QAIG). Arginine 144 is a binding site for a 1,2-diacyl-sn-glycero-3-phospho-(1'-sn-glycerol). The next 2 membrane-spanning stretches (helical) occupy residues 191–211 (VHPT…LLIW) and 254–274 (INTL…LRLG). The interval 283-322 (VDPAYHAAQAERDDTETAGLDATTGTVPGDSPETTGKKRK) is disordered.

It belongs to the Lgt family.

Its subcellular location is the cell membrane. The catalysed reaction is L-cysteinyl-[prolipoprotein] + a 1,2-diacyl-sn-glycero-3-phospho-(1'-sn-glycerol) = an S-1,2-diacyl-sn-glyceryl-L-cysteinyl-[prolipoprotein] + sn-glycerol 1-phosphate + H(+). It functions in the pathway protein modification; lipoprotein biosynthesis (diacylglyceryl transfer). Functionally, catalyzes the transfer of the diacylglyceryl group from phosphatidylglycerol to the sulfhydryl group of the N-terminal cysteine of a prolipoprotein, the first step in the formation of mature lipoproteins. This is Phosphatidylglycerol--prolipoprotein diacylglyceryl transferase from Corynebacterium efficiens (strain DSM 44549 / YS-314 / AJ 12310 / JCM 11189 / NBRC 100395).